A 284-amino-acid chain; its full sequence is Succinate dehydrogenase [ubiquinone] iron-sulfur subunit, mitochondrial (284 aa).

The N-terminal 26 residues, 1 to 26 (MAAVVFSLRRSGPVFRLPGVLQVCRG), are a transit peptide targeting the mitochondrion. A 2Fe-2S ferredoxin-type domain is found at 44–137 (KKFAIYRWDP…VSKIYPLPHM (94 aa)). The [2Fe-2S] cluster site is built by Cys-97, Cys-102, Cys-105, and Cys-117. The region spanning 180–210 (DRDKLDGLYECILCACCSTSCPSYWWNADKY) is the 4Fe-4S ferredoxin-type domain. [4Fe-4S] cluster contacts are provided by Cys-190, Cys-193, and Cys-196. Position 200 (Cys-200) interacts with [3Fe-4S] cluster. Trp-205 serves as a coordination point for a ubiquinone. 2 residues coordinate [3Fe-4S] cluster: Cys-247 and Cys-253. Cys-257 contributes to the [4Fe-4S] cluster binding site.

It belongs to the succinate dehydrogenase/fumarate reductase iron-sulfur protein family. In terms of assembly, component of complex II composed of four subunits: the flavoprotein (FP) sdha, iron-sulfur protein (IP) sdhb, and a cytochrome b composed of sdhc and sdhd. Requires [2Fe-2S] cluster as cofactor. [3Fe-4S] cluster is required as a cofactor. [4Fe-4S] cluster serves as cofactor.

Its subcellular location is the mitochondrion inner membrane. The enzyme catalyses a quinone + succinate = fumarate + a quinol. The catalysed reaction is (R)-malate + a quinone = enol-oxaloacetate + a quinol. It catalyses the reaction (S)-malate + a quinone = enol-oxaloacetate + a quinol. It participates in carbohydrate metabolism; tricarboxylic acid cycle; fumarate from succinate (eukaryal route): step 1/1. Its activity is regulated as follows. Enol-oxaloacetate inhibits the succinate dehydrogenase activity. Its function is as follows. Iron-sulfur protein (IP) subunit of the succinate dehydrogenase complex (mitochondrial respiratory chain complex II), responsible for transferring electrons from succinate to ubiquinone (coenzyme Q). SDH also oxidizes malate to the non-canonical enol form of oxaloacetate, enol-oxaloacetate. Enol-oxaloacetate, which is a potent inhibitor of the succinate dehydrogenase activity, is further isomerized into keto-oxaloacetate. The polypeptide is Succinate dehydrogenase [ubiquinone] iron-sulfur subunit, mitochondrial (sdhb) (Xenopus tropicalis (Western clawed frog)).